Reading from the N-terminus, the 292-residue chain is UDP-N-acetylenolpyruvoylglucosamine reductase (292 aa).

The FAD-binding PCMH-type domain maps to 21-186 (QAGGLVDYLA…ISATFELQPD (166 aa)). Residue Arg-165 is part of the active site. Ser-215 functions as the Proton donor in the catalytic mechanism. Glu-285 is a catalytic residue.

It belongs to the MurB family. The cofactor is FAD.

The protein resides in the cytoplasm. It carries out the reaction UDP-N-acetyl-alpha-D-muramate + NADP(+) = UDP-N-acetyl-3-O-(1-carboxyvinyl)-alpha-D-glucosamine + NADPH + H(+). Its pathway is cell wall biogenesis; peptidoglycan biosynthesis. Its function is as follows. Cell wall formation. The polypeptide is UDP-N-acetylenolpyruvoylglucosamine reductase (Leuconostoc mesenteroides subsp. mesenteroides (strain ATCC 8293 / DSM 20343 / BCRC 11652 / CCM 1803 / JCM 6124 / NCDO 523 / NBRC 100496 / NCIMB 8023 / NCTC 12954 / NRRL B-1118 / 37Y)).